The following is a 286-amino-acid chain: uncharacterized protein (286 aa).

Belongs to the chlamydial CPn_0389/CT_041/TC_0311 family.

This is an uncharacterized protein from Chlamydia muridarum (strain MoPn / Nigg).